Reading from the N-terminus, the 274-residue chain is Trehalose transport system permease protein SugB (274 aa).

6 consecutive transmembrane segments (helical) span residues 8-28, 70-90, 102-122, 137-157, 182-202, and 239-259; these read YWAV…LWIF, IGIG…AAYA, LIGA…TPLF, LILP…SAFF, VIVP…FIFA, and GSIA…VLIF. An ABC transmembrane type-1 domain is found at 66–259; that stretch reads LINSIGIGLI…IPIIVFVLIF (194 aa).

Belongs to the binding-protein-dependent transport system permease family. The complex is composed of two ATP-binding proteins (SugC), two transmembrane proteins (Suga and SugB) and a solute-binding protein (LpqY).

Its subcellular location is the cell inner membrane. In terms of biological role, part of the ABC transporter complex LpqY-SugA-SugB-SugC, which is highly specific for uptake of trehalose. Involved in the recycling of extracellular trehalose released from trehalose-containing molecules synthesized by M.tuberculosis. Trehalose uptake is essential for virulence. Probably responsible for the translocation of the substrate across the membrane. This Mycobacterium tuberculosis (strain CDC 1551 / Oshkosh) protein is Trehalose transport system permease protein SugB (sugB).